We begin with the raw amino-acid sequence, 106 residues long: Biogenesis of lysosome-related organelles complex 1 subunit 6 (106 aa).

Residues 78-106 (KKTSQLELSDTNIEDGSTTSTPTTTNKSQ) are disordered. The span at 82–93 (QLELSDTNIEDG) shows a compositional bias: polar residues. Low complexity predominate over residues 94 to 106 (STTSTPTTTNKSQ).

It belongs to the BLOC1S6 family. As to quaternary structure, homodimer (isoform 1). Component of the biogenesis of lysosome-related organelles complex-1 (BLOC-1) composed at least of blos-1, blos-2, blos-4, dsbn-1, glo-2, mutd-1 and snpn-1. Isoform 1 interacts with blos-1 and blos-4.

The protein resides in the cytoplasm. The protein localises to the endosome. Component of the biogenesis of lysosome-related organelles complex-1 (BLOC-1) involved in gut granule biogenesis. This is Biogenesis of lysosome-related organelles complex 1 subunit 6 (glo-2) from Caenorhabditis elegans.